Here is a 701-residue protein sequence, read N- to C-terminus: Elongation factor G (701 aa).

The region spanning 11–287 (SRVRNFGIMA…AVVDYLPSPL (277 aa)) is the tr-type G domain. GTP-binding positions include 20–27 (AHIDAGKT), 84–88 (DTPGH), and 138–141 (NKMD).

It belongs to the TRAFAC class translation factor GTPase superfamily. Classic translation factor GTPase family. EF-G/EF-2 subfamily.

The protein localises to the cytoplasm. Catalyzes the GTP-dependent ribosomal translocation step during translation elongation. During this step, the ribosome changes from the pre-translocational (PRE) to the post-translocational (POST) state as the newly formed A-site-bound peptidyl-tRNA and P-site-bound deacylated tRNA move to the P and E sites, respectively. Catalyzes the coordinated movement of the two tRNA molecules, the mRNA and conformational changes in the ribosome. The chain is Elongation factor G (fusA) from Mycobacterium tuberculosis (strain CDC 1551 / Oshkosh).